The chain runs to 919 residues: Exostosin-like 3 (919 aa).

At 1–30 (MTGYTMLRNGGAGNGGQTCMLRWSNRIRLT) the chain is on the cytoplasmic side. The interval 1-140 (MTGYTMLRNG…LKNVISQTEH (140 aa)) is required for interaction with REG3A. The helical; Signal-anchor for type II membrane protein transmembrane segment at 31 to 51 (WLSFTLFVILVFFPLIAHYYL) threads the bilayer. The Lumenal segment spans residues 52–919 (TTLDEADEAG…HDKTKCFKFI (868 aa)). 2 disulfide bridges follow: cysteine 177–cysteine 182 and cysteine 188–cysteine 236. Asparagine 290 is a glycosylation site (N-linked (GlcNAc...) asparagine). Serine 362 bears the Phosphoserine mark. Residues cysteine 400 and cysteine 415 are joined by a disulfide bond. Asparagine 592 carries N-linked (GlcNAc...) asparagine glycosylation. The UDP-N-acetyl-alpha-D-glucosamine site is built by leucine 668, arginine 672, asparagine 697, asparagine 723, arginine 728, aspartate 744, aspartate 745, and aspartate 746. Mn(2+) is bound at residue aspartate 746. N-linked (GlcNAc...) asparagine glycosylation is present at asparagine 790. Residues cysteine 831 and cysteine 879 are joined by a disulfide bond. Glutamate 832, aspartate 833, and arginine 876 together coordinate UDP-N-acetyl-alpha-D-glucosamine. Aspartate 833 is an active-site residue.

It belongs to the glycosyltransferase 47 family. In terms of assembly, homodimer; disulfide-linked. Interacts with REG3A. Mn(2+) is required as a cofactor. As to expression, ubiquitous. Expressed in keratinocytes. Expressed in pancreas.

It is found in the endoplasmic reticulum membrane. Its subcellular location is the golgi apparatus. The protein resides in the cell membrane. It localises to the nucleus. It catalyses the reaction 3-O-(beta-D-GlcA-(1-&gt;3)-beta-D-Gal-(1-&gt;3)-beta-D-Gal-(1-&gt;4)-beta-D-Xyl)-L-seryl-[protein] + UDP-N-acetyl-alpha-D-glucosamine = 3-O-(alpha-D-GlcNAc-(1-&gt;4)-beta-D-GlcA-(1-&gt;3)-beta-D-Gal-(1-&gt;3)-beta-D-Gal-(1-&gt;4)-beta-D-Xyl)-L-seryl-[protein] + UDP + H(+). It participates in glycan metabolism; heparan sulfate biosynthesis. Functionally, glycosyltransferase which regulates the biosynthesis of heparan sulfate (HS). Initiates HS synthesis by transferring the first N-acetyl-alpha-D-glucosamine (alpha-GlcNAc) residue (GlcNAcT-I activity) to the tetrasaccharide linker (GlcA-Gal-Gal-Xyl-)Ser core linker. May also transfer alpha-GlcNAc residues during HS elongation (GlcNAcT-II activity). Lacks glucuronyl transferase II (GlcAT-II) activity. Important for both skeletal development and hematopoiesis, through the formation of HS proteoglycans (HSPGs). Through the synthesis of HS, regulates postnatal pancreatic islet maturation and insulin secretion. Receptor for REG3A, REG3B and REG3G, induces the activation of downstream signaling pathways such as PI3K-AKT or RAS-RAF-MEK-ERK signaling pathway. Required for the function of REG3A in regulating keratinocyte proliferation and differentiation. Required for the inhibition of skin inflammation mediated by REG3A through the activation of PI3K-AKT-STAT3 pathway. Required for the function of REG3A and REG3G in glucose tolerance in pancreas. Expressed in microglia, is activated by nociceptor-derived REG3G in response to endotoxins, leading to the inhibition of kynurenine pathway to prevent endotoxic death. In Homo sapiens (Human), this protein is Exostosin-like 3.